A 165-amino-acid chain; its full sequence is Crossover junction endodeoxyribonuclease RuvC (165 aa).

Residues D8, E66, and D138 contribute to the active site. 3 residues coordinate Mg(2+): D8, E66, and D138.

The protein belongs to the RuvC family. As to quaternary structure, homodimer which binds Holliday junction (HJ) DNA. The HJ becomes 2-fold symmetrical on binding to RuvC with unstacked arms; it has a different conformation from HJ DNA in complex with RuvA. In the full resolvosome a probable DNA-RuvA(4)-RuvB(12)-RuvC(2) complex forms which resolves the HJ. The cofactor is Mg(2+).

The protein resides in the cytoplasm. The enzyme catalyses Endonucleolytic cleavage at a junction such as a reciprocal single-stranded crossover between two homologous DNA duplexes (Holliday junction).. The RuvA-RuvB-RuvC complex processes Holliday junction (HJ) DNA during genetic recombination and DNA repair. Endonuclease that resolves HJ intermediates. Cleaves cruciform DNA by making single-stranded nicks across the HJ at symmetrical positions within the homologous arms, yielding a 5'-phosphate and a 3'-hydroxyl group; requires a central core of homology in the junction. The consensus cleavage sequence is 5'-(A/T)TT(C/G)-3'. Cleavage occurs on the 3'-side of the TT dinucleotide at the point of strand exchange. HJ branch migration catalyzed by RuvA-RuvB allows RuvC to scan DNA until it finds its consensus sequence, where it cleaves and resolves the cruciform DNA. This is Crossover junction endodeoxyribonuclease RuvC from Methylococcus capsulatus (strain ATCC 33009 / NCIMB 11132 / Bath).